Reading from the N-terminus, the 369-residue chain is S-(hydroxymethyl)glutathione dehydrogenase (369 aa).

Residues cysteine 40, histidine 62, cysteine 92, cysteine 95, cysteine 98, cysteine 106, and cysteine 169 each coordinate Zn(2+).

It belongs to the zinc-containing alcohol dehydrogenase family. Class-III subfamily. Homodimer. Zn(2+) serves as cofactor.

Its subcellular location is the cytoplasm. The catalysed reaction is S-(hydroxymethyl)glutathione + NADP(+) = S-formylglutathione + NADPH + H(+). The enzyme catalyses S-(hydroxymethyl)glutathione + NAD(+) = S-formylglutathione + NADH + H(+). It carries out the reaction a primary alcohol + NAD(+) = an aldehyde + NADH + H(+). It catalyses the reaction a secondary alcohol + NAD(+) = a ketone + NADH + H(+). The catalysed reaction is S-nitrosoglutathione + NADH + H(+) = S-(hydroxysulfenamide)glutathione + NAD(+). Its function is as follows. Has high formaldehyde dehydrogenase activity in the presence of glutathione and catalyzes the oxidation of normal alcohols in a reaction that is not GSH-dependent. In addition, hemithiolacetals other than those formed from GSH, including omega-thiol fatty acids, also are substrates. Also acts as a S-nitroso-glutathione reductase by catalyzing the NADH-dependent reduction of S-nitrosoglutathione. This is S-(hydroxymethyl)glutathione dehydrogenase (frmA) from Escherichia coli O6:H1 (strain CFT073 / ATCC 700928 / UPEC).